A 253-amino-acid chain; its full sequence is Snake venom serine protease homolog HS120 (253 aa).

Positions 1-18 (MVLIRVIANLLILQLSYA) are cleaved as a signal peptide. A propeptide spanning residues 19 to 24 (QKSSEL) is cleaved from the precursor. Positions 25 to 244 (VIGGDECNIN…YLPWIQSIIA (220 aa)) constitute a Peptidase S1 domain. Intrachain disulfides connect cysteine 31/cysteine 158, cysteine 49/cysteine 65, cysteine 98/cysteine 251, cysteine 137/cysteine 205, cysteine 169/cysteine 184, and cysteine 195/cysteine 220. N-linked (GlcNAc...) asparagine glycans are attached at residues asparagine 116 and asparagine 165.

This sequence belongs to the peptidase S1 family. Snake venom subfamily. Expressed by the venom gland.

It localises to the secreted. Functionally, snake venom serine protease homolog that may act in the hemostasis system of the prey. The chain is Snake venom serine protease homolog HS120 from Bothrops jararaca (Jararaca).